Consider the following 313-residue polypeptide: Formate-nitrite transporter (313 aa).

Over 1–47 the chain is Cytoplasmic; sequence MPKSNTKYVIDPLSVKTSCSSEESYIRCVEYGKSKAHYSSLILLAKA. A helical transmembrane segment spans residues 48–68; it reads ILAGVFVGVCAHASGIAGGLF. Over 69–77 the chain is Extracellular; that stretch reads YYHKLREYV. A helical membrane pass occupies residues 78-98; that stretch reads GASMSAFVYGFTFPIAFLCII. At 99 to 128 the chain is on the cytoplasmic side; that stretch reads CTGSDLFTGNTLAVTTALLHGKVSCLEYVR. A helical membrane pass occupies residues 129–149; the sequence is VMCISLFGNYVGAVSFAFFVS. The Extracellular segment spans residues 150-185; the sequence is YGSGAFHKKEQVDKNHIFQFLNDIAVKKVNHTFVEC. N-linked (GlcNAc...) asparagine glycosylation occurs at Asn179. A helical transmembrane segment spans residues 186-206; sequence ICLAIGCNIFVCLAVYFVLSI. Over 207–211 the chain is Cytoplasmic; that stretch reads KDGSG. A helical membrane pass occupies residues 212–232; the sequence is MVFSVFFAVYAFAIAGYEHII. Residues 233 to 260 are Extracellular-facing; it reads ANIYTLNISLMIDTEVSFTQVYFKNLLP. Residue Asn239 is glycosylated (N-linked (GlcNAc...) asparagine). The helical transmembrane segment at 261-281 threads the bilayer; it reads TLIGNYIAGALVLACPLFFIY. Residues 282 to 313 are Cytoplasmic-facing; sequence RSYYINYEKMNEPSGGSLRSISIEMKNDGGAT.

The protein belongs to the FNT transporter (TC 1.A.16) family. Homopentamer.

Its subcellular location is the cell membrane. The protein localises to the vacuole membrane. It carries out the reaction (S)-lactate(in) + H(+)(in) = (S)-lactate(out) + H(+)(out). The enzyme catalyses formate(in) + H(+)(in) = formate(out) + H(+)(out). It catalyses the reaction pyruvate(out) + H(+)(out) = pyruvate(in) + H(+)(in). The catalysed reaction is acetate(out) + H(+)(out) = acetate(in) + H(+)(in). Its activity is regulated as follows. Inhibited by the Malaria Box compound MMV007839 and its derivatives BH296 and BH267.meta. Monocarboxylate-proton symporter that mediates the efflux of the waste product lactate in the intraerythrocytic parasites; active in acidic-to-neutral pH range. Transports L-lactate. The polypeptide is Formate-nitrite transporter (Plasmodium ovale).